The chain runs to 195 residues: Calcineurin B homologous protein 1 (195 aa).

Gly-2 carries the N-myristoyl glycine lipid modification. A Necessary for association with microtubule and interaction with GAPDH motif is present at residues 2–6 (GSRAS). 4 consecutive EF-hand domains span residues 26–61 (SQIT…AINP), 66–101 (IINA…KSKD), 110–145 (SRSN…MVGV), and 151–186 (QLGS…VDVE). 5 residues coordinate Ca(2+): Asp-123, Asp-125, Asp-127, Lys-129, and Glu-134. The Nuclear export signal 1 motif lies at 138–147 (VLRMMVGVNI). The interval 143-185 (VGVNISDEQLGSIADRTIQEADQDGDSAISFTEFVKVLEKVDV) is necessary for nuclear export signal. Positions 164, 166, 168, and 175 each coordinate Ca(2+). The short motif at 176 to 185 (FVKVLEKVDV) is the Nuclear export signal 2 element.

It belongs to the calcineurin regulatory subunit family. CHP subfamily. Monomer. Interacts with STK17B; the interaction occurs in a calcium-independent manner and induces the translocation of CHP1 from the Golgi to the nucleus. Interacts with GAPDH; the interaction is direct, occurs in a N-myristoylation-dependent manner and facilitates the ability of CHP1 to bind microtubules. Interacts with KIF1B (via the C-terminal end of the kinesin-motor domain); the interaction occurs in a calcium-dependent manner. Associates (via C-terminal domain) with microtubules; the association occurs with polymerized microtubules during the cell cycle in a myristoylation- and calcium-independent manner and is enhanced by GAPDH. Interacts with PPP3CA. Interacts with SLC9A1/NHE1 (via the C-terminal domain); the interaction occurs at the plasma membrane in a calcium-dependent manner and at a domain that is critical for growth factor stimulation of the exchanger. Interacts with SLC9A3; increases SLC9A3 trafficking and activity at the plasma membrane. In terms of processing, phosphorylated; decreased phosphorylation is associated with an increase in SLC9A1/NHE1 Na(+)/H(+) exchange activity. Phosphorylation occurs in serum-dependent manner. The phosphorylation state may regulate the binding to SLC9A1/NHE1. Both N-myristoylation and calcium-mediated conformational changes are essential for its function in exocytic traffic. N-myristoylation is required for its association with microtubules and interaction with GAPDH, but not for the constitutive association to membranes. In terms of tissue distribution, ubiquitously expressed. Has been found in fetal eye, lung, liver, muscle, heart, kidney, thymus and spleen.

The protein resides in the nucleus. Its subcellular location is the cytoplasm. It localises to the cytoskeleton. It is found in the endomembrane system. The protein localises to the endoplasmic reticulum-Golgi intermediate compartment. The protein resides in the endoplasmic reticulum. Its subcellular location is the cell membrane. It localises to the membrane. Calcium-binding protein involved in different processes such as regulation of vesicular trafficking, plasma membrane Na(+)/H(+) exchanger and gene transcription. Involved in the constitutive exocytic membrane traffic. Mediates the association between microtubules and membrane-bound organelles of the endoplasmic reticulum and Golgi apparatus and is also required for the targeting and fusion of transcytotic vesicles (TCV) with the plasma membrane. Functions as an integral cofactor in cell pH regulation by controlling plasma membrane-type Na(+)/H(+) exchange activity. Affects the pH sensitivity of SLC9A1/NHE1 by increasing its sensitivity at acidic pH. Required for the stabilization and localization of SLC9A1/NHE1 at the plasma membrane. Inhibits serum- and GTPase-stimulated Na(+)/H(+) exchange. Plays a role as an inhibitor of ribosomal RNA transcription by repressing the nucleolar UBF1 transcriptional activity. May sequester UBF1 in the nucleoplasm and limit its translocation to the nucleolus. Associates to the ribosomal gene promoter. Acts as a negative regulator of the calcineurin/NFAT signaling pathway. Inhibits NFAT nuclear translocation and transcriptional activity by suppressing the calcium-dependent calcineurin phosphatase activity. Also negatively regulates the kinase activity of the apoptosis-induced kinase STK17B. Inhibits both STK17B auto- and substrate-phosphorylations in a calcium-dependent manner. The polypeptide is Calcineurin B homologous protein 1 (CHP1) (Homo sapiens (Human)).